The sequence spans 612 residues: Zinc metalloproteinase nas-36 (612 aa).

An N-terminal signal peptide occupies residues 1-16 (MLLLVLLFVFISATNA). The N-linked (GlcNAc...) asparagine glycan is linked to N15. Residues 17–122 (SDVGRRELEK…KSKPNVRGRR (106 aa)) constitute a propeptide that is removed on maturation. Residues 123-320 (SFDASPESKW…IETINKAYCS (198 aa)) enclose the Peptidase M12A domain. N163 is a glycosylation site (N-linked (GlcNAc...) asparagine). 8 disulfides stabilise this stretch: C166/C319, C190/C209, C329/C343, C345/C354, C365/C394, C515/C546, C519/C551, and C531/C536. Residue H217 coordinates Zn(2+). E218 is an active-site residue. H221 and H227 together coordinate Zn(2+). Residues 320 to 355 (SDRCSGSNDCKNGGYPHPKQCDTCLCPNGLSGPKCE) enclose the EGF-like domain. Residues 365–478 (CGGKIVVKEE…VGFKLQARAT (114 aa)) form the CUB domain. Residues 503–552 (TDQWAEWGSWSQCSRSCGGCGIMSRVRVCRTKQCKGRRQEFSTCNLKACP) form the TSP type-1 domain.

Zn(2+) is required as a cofactor.

Its subcellular location is the secreted. Its activity is regulated as follows. Inhibited by 1,10-phenanthroline. Metalloprotease. Involved in molting, a process during larval stages in which a new cuticle is formed and the old cuticle is shed. This is Zinc metalloproteinase nas-36 from Haemonchus contortus (Barber pole worm).